A 326-amino-acid chain; its full sequence is GMP reductase (326 aa).

Cys-175 acts as the Thioimidate intermediate in catalysis. NADP(+) is bound at residue 204 to 227 (IIADGGIRTHGDIAKSVRFGATMV).

The protein belongs to the IMPDH/GMPR family. GuaC type 2 subfamily.

The enzyme catalyses IMP + NH4(+) + NADP(+) = GMP + NADPH + 2 H(+). Functionally, catalyzes the irreversible NADPH-dependent deamination of GMP to IMP. It functions in the conversion of nucleobase, nucleoside and nucleotide derivatives of G to A nucleotides, and in maintaining the intracellular balance of A and G nucleotides. This chain is GMP reductase, found in Bacillus licheniformis (strain ATCC 14580 / DSM 13 / JCM 2505 / CCUG 7422 / NBRC 12200 / NCIMB 9375 / NCTC 10341 / NRRL NRS-1264 / Gibson 46).